Consider the following 427-residue polypeptide: Peptidase B (427 aa).

Positions 195 and 200 each coordinate Mn(2+). Lys207 is an active-site residue. Residues Asp218, Asp277, and Glu279 each contribute to the Mn(2+) site. Residue Arg281 is part of the active site.

The protein belongs to the peptidase M17 family. Homohexamer. Mn(2+) serves as cofactor.

It is found in the cytoplasm. The enzyme catalyses Release of an N-terminal amino acid, Xaa, from a peptide or arylamide. Xaa is preferably Glu or Asp but may be other amino acids, including Leu, Met, His, Cys and Gln.. Its function is as follows. Probably plays an important role in intracellular peptide degradation. This Escherichia coli O127:H6 (strain E2348/69 / EPEC) protein is Peptidase B.